The following is a 49-amino-acid chain: Large ribosomal subunit protein bL33A (49 aa).

Belongs to the bacterial ribosomal protein bL33 family.

This chain is Large ribosomal subunit protein bL33A, found in Staphylococcus haemolyticus (strain JCSC1435).